The chain runs to 383 residues: uncharacterized protein (383 aa).

This sequence belongs to the peptidase M20 family.

This is an uncharacterized protein from Staphylococcus epidermidis (strain ATCC 35984 / DSM 28319 / BCRC 17069 / CCUG 31568 / BM 3577 / RP62A).